Reading from the N-terminus, the 469-residue chain is L-seryl-tRNA(Sec) selenium transferase (469 aa).

Lys298 bears the N6-(pyridoxal phosphate)lysine mark.

This sequence belongs to the SelA family. The cofactor is pyridoxal 5'-phosphate.

The protein resides in the cytoplasm. It catalyses the reaction L-seryl-tRNA(Sec) + selenophosphate + H(+) = L-selenocysteinyl-tRNA(Sec) + phosphate. Its pathway is aminoacyl-tRNA biosynthesis; selenocysteinyl-tRNA(Sec) biosynthesis; selenocysteinyl-tRNA(Sec) from L-seryl-tRNA(Sec) (bacterial route): step 1/1. In terms of biological role, converts seryl-tRNA(Sec) to selenocysteinyl-tRNA(Sec) required for selenoprotein biosynthesis. The chain is L-seryl-tRNA(Sec) selenium transferase from Nitratidesulfovibrio vulgaris (strain ATCC 29579 / DSM 644 / CCUG 34227 / NCIMB 8303 / VKM B-1760 / Hildenborough) (Desulfovibrio vulgaris).